The sequence spans 241 residues: Phosphoribosylaminoimidazole-succinocarboxamide synthase (241 aa).

The protein belongs to the SAICAR synthetase family.

The enzyme catalyses 5-amino-1-(5-phospho-D-ribosyl)imidazole-4-carboxylate + L-aspartate + ATP = (2S)-2-[5-amino-1-(5-phospho-beta-D-ribosyl)imidazole-4-carboxamido]succinate + ADP + phosphate + 2 H(+). Its pathway is purine metabolism; IMP biosynthesis via de novo pathway; 5-amino-1-(5-phospho-D-ribosyl)imidazole-4-carboxamide from 5-amino-1-(5-phospho-D-ribosyl)imidazole-4-carboxylate: step 1/2. This chain is Phosphoribosylaminoimidazole-succinocarboxamide synthase, found in Lacticaseibacillus casei (strain BL23) (Lactobacillus casei).